A 212-amino-acid chain; its full sequence is Pyridoxine/pyridoxamine 5'-phosphate oxidase (212 aa).

Substrate contacts are provided by residues 7–10 (RREY) and Lys-66. Residues 61-66 (RIVLLK), 76-77 (YT), Lys-83, and Gln-105 contribute to the FMN site. The substrate site is built by Tyr-123, Arg-127, and Ser-131. Residues 140–141 (QS) and Trp-185 contribute to the FMN site. Substrate is bound at residue 191-193 (RLH). Arg-195 is a binding site for FMN.

The protein belongs to the pyridoxamine 5'-phosphate oxidase family. In terms of assembly, homodimer. It depends on FMN as a cofactor.

It carries out the reaction pyridoxamine 5'-phosphate + O2 + H2O = pyridoxal 5'-phosphate + H2O2 + NH4(+). The catalysed reaction is pyridoxine 5'-phosphate + O2 = pyridoxal 5'-phosphate + H2O2. It participates in cofactor metabolism; pyridoxal 5'-phosphate salvage; pyridoxal 5'-phosphate from pyridoxamine 5'-phosphate: step 1/1. Its pathway is cofactor metabolism; pyridoxal 5'-phosphate salvage; pyridoxal 5'-phosphate from pyridoxine 5'-phosphate: step 1/1. In terms of biological role, catalyzes the oxidation of either pyridoxine 5'-phosphate (PNP) or pyridoxamine 5'-phosphate (PMP) into pyridoxal 5'-phosphate (PLP). The chain is Pyridoxine/pyridoxamine 5'-phosphate oxidase from Idiomarina loihiensis (strain ATCC BAA-735 / DSM 15497 / L2-TR).